Reading from the N-terminus, the 607-residue chain is Chaperone protein DnaK (607 aa).

Position 174 is a phosphothreonine; by autocatalysis (Thr174). Positions 579 to 592 (AQAQAQQQAGANAG) are enriched in low complexity. The segment at 579–607 (AQAQAQQQAGANAGSDKKDEDVAEAEVVD) is disordered.

The protein belongs to the heat shock protein 70 family.

Functionally, acts as a chaperone. This Fusobacterium nucleatum subsp. nucleatum (strain ATCC 25586 / DSM 15643 / BCRC 10681 / CIP 101130 / JCM 8532 / KCTC 2640 / LMG 13131 / VPI 4355) protein is Chaperone protein DnaK.